The sequence spans 136 residues: MARTKQTARKSTGGKAPRKQLATKAARKSAPATGGVKKPHRYRPGTVALREIRRYQKSTELLIRKLPFQRLVREIAQDFKTELRFQSSAVMALQEASEAYLVRLFEDTNLCAIHAKRVTIMPKDIQLARRIRGERA.

Positions 1–43 (MARTKQTARKSTGGKAPRKQLATKAARKSAPATGGVKKPHRYR) are disordered. Lysine 5 carries the N6-methylated lysine modification. Lysine 10 carries the N6-acetyllysine; alternate modification. Lysine 10 is modified (N6-methylated lysine; alternate). Residue serine 11 is modified to Phosphoserine. Lysine 15 and lysine 24 each carry N6-acetyllysine. 3 positions are modified to N6-methylated lysine: lysine 28, lysine 37, and lysine 80.

The protein belongs to the histone H3 family. As to quaternary structure, the nucleosome is a histone octamer containing two molecules each of H2A, H2B, H3 and H4 assembled in one H3-H4 heterotetramer and two H2A-H2B heterodimers. The octamer wraps approximately 147 bp of DNA. Post-translationally, acetylation is generally linked to gene activation. In terms of processing, methylation at Lys-5 is linked to gene activation. Methylation at Lys-10 is linked to gene repression.

Its subcellular location is the nucleus. The protein resides in the chromosome. In terms of biological role, core component of nucleosome. Nucleosomes wrap and compact DNA into chromatin, limiting DNA accessibility to the cellular machineries which require DNA as a template. Histones thereby play a central role in transcription regulation, DNA repair, DNA replication and chromosomal stability. DNA accessibility is regulated via a complex set of post-translational modifications of histones, also called histone code, and nucleosome remodeling. The chain is Histone H3, embryonic from Strongylocentrotus purpuratus (Purple sea urchin).